A 133-amino-acid polypeptide reads, in one-letter code: Fatty acid-binding protein homolog 2 (133 aa).

Residues arginine 107 and 127-129 (RTY) each bind a fatty acid.

It belongs to the calycin superfamily. Fatty-acid binding protein (FABP) family.

Functionally, may play a role in the acquisition, storage, and transport of lipids, and may be important to the organism since it is incapable of synthesizing most of its lipids de novo. The protein is Fatty acid-binding protein homolog 2 (FABP2) of Echinococcus granulosus (Hydatid tapeworm).